The primary structure comprises 201 residues: Histone-like protein HC2 (201 aa).

The tract at residues 1 to 69 (MLGVQKKCST…VAKKATAKKA (69 aa)) is disordered. Basic residues-rich tracts occupy residues 8-50 (CSTR…KTVA) and 59-69 (PVAKKATAKKA).

Belongs to the histone H1/H5 family. HCT subfamily.

Its function is as follows. Might have a role in establishing the nucleoid structure of elementary bodies. The protein is Histone-like protein HC2 (hctB) of Chlamydia trachomatis serovar D (strain ATCC VR-885 / DSM 19411 / UW-3/Cx).